We begin with the raw amino-acid sequence, 469 residues long: NADH-quinone oxidoreductase subunit N (469 aa).

14 helical membrane passes run 6 to 26 (IWII…LLLG), 37 to 57 (VGVA…PAAL), 61 to 81 (LGVA…LTAA), 96 to 116 (ISGE…AVVS), 121 to 141 (LLIL…LVAI), 156 to 176 (LLLG…LYAA), 197 to 217 (PIAL…ISLV), 234 to 254 (VVAF…LLLL), 263 to 283 (LHTP…LAAL), 291 to 311 (MLAY…LTGS), 315 to 335 (FAAV…AFGA), 362 to 382 (AGIL…AGFI), 397 to 419 (IPLA…RVVV), and 441 to 461 (IALS…SPLL).

Belongs to the complex I subunit 2 family. In terms of assembly, NDH-1 is composed of 14 different subunits. Subunits NuoA, H, J, K, L, M, N constitute the membrane sector of the complex.

Its subcellular location is the cell inner membrane. The catalysed reaction is a quinone + NADH + 5 H(+)(in) = a quinol + NAD(+) + 4 H(+)(out). In terms of biological role, NDH-1 shuttles electrons from NADH, via FMN and iron-sulfur (Fe-S) centers, to quinones in the respiratory chain. The immediate electron acceptor for the enzyme in this species is believed to be ubiquinone. Couples the redox reaction to proton translocation (for every two electrons transferred, four hydrogen ions are translocated across the cytoplasmic membrane), and thus conserves the redox energy in a proton gradient. The polypeptide is NADH-quinone oxidoreductase subunit N (Geotalea uraniireducens (strain Rf4) (Geobacter uraniireducens)).